The sequence spans 235 residues: Uridylate kinase (235 aa).

ATP is bound at residue 9 to 12 (KLSG). Residue G51 participates in UMP binding. The ATP site is built by G52 and R56. Residues D71 and 132–139 (TGNPYFTT) contribute to the UMP site. T159, Y165, and D168 together coordinate ATP.

Belongs to the UMP kinase family. Homohexamer.

Its subcellular location is the cytoplasm. It catalyses the reaction UMP + ATP = UDP + ADP. It participates in pyrimidine metabolism; CTP biosynthesis via de novo pathway; UDP from UMP (UMPK route): step 1/1. Inhibited by UTP. Functionally, catalyzes the reversible phosphorylation of UMP to UDP. This Christiangramia forsetii (strain DSM 17595 / CGMCC 1.15422 / KT0803) (Gramella forsetii) protein is Uridylate kinase.